The sequence spans 959 residues: Protein moonraker (959 aa).

The interval 124–156 (LPHSSHKGMHTKVERKDSKSQDVCHCSHQPSRV) is disordered. Residues 134–145 (TKVERKDSKSQD) are compositionally biased toward basic and acidic residues. S279 is subject to Phosphoserine. The span at 456–470 (EEAPRIEDNGTDFKD) shows a compositional bias: basic and acidic residues. 2 disordered regions span residues 456–560 (EEAP…ASPK) and 572–610 (RDAA…AESS). Polar residues predominate over residues 515 to 533 (PNQPYSKSRLQQTTVSSRL). Residues 547-558 (WIPPNPTSPPAS) are compositionally biased toward pro residues. Residues 582–674 (QEDIHKESQL…TQLADKVEEA (93 aa)) adopt a coiled-coil conformation. The span at 583-599 (EDIHKESQLRGDAEQEA) shows a compositional bias: basic and acidic residues. At S691 the chain carries Phosphoserine. Disordered regions lie at residues 692–721 (SVEA…SDVP) and 848–883 (LDES…PLSV). Residues 707-717 (AAAAAQPAEQA) are compositionally biased toward low complexity. Over residues 857–874 (GSEKREAPLPLSREDLHQ) the composition is skewed to basic and acidic residues. Residues 877–959 (GQTPLSVPPR…FTSEFLEAAA (83 aa)) form a necessary and sufficient for CEP20-binding region.

Interacts with CEP63 and WDR62. Forms a complex with OFD1 and CEP20/FOR20. Interacts with PCM1.

The protein resides in the cytoplasm. It localises to the cytoskeleton. It is found in the microtubule organizing center. Its subcellular location is the centrosome. The protein localises to the centriolar satellite. Functionally, involved in centriole duplication. Positively regulates CEP63 centrosomal localization. Required for WDR62 centrosomal localization and promotes the centrosomal localization of CDK2. May play a role in cilium assembly. This Mus musculus (Mouse) protein is Protein moonraker (Kiaa0753).